Here is a 621-residue protein sequence, read N- to C-terminus: Glutamyl-tRNA(Gln) amidotransferase subunit E (621 aa).

It belongs to the GatB/GatE family. GatE subfamily. Heterodimer of GatD and GatE.

The enzyme catalyses L-glutamyl-tRNA(Gln) + L-glutamine + ATP + H2O = L-glutaminyl-tRNA(Gln) + L-glutamate + ADP + phosphate + H(+). Allows the formation of correctly charged Gln-tRNA(Gln) through the transamidation of misacylated Glu-tRNA(Gln) in organisms which lack glutaminyl-tRNA synthetase. The reaction takes place in the presence of glutamine and ATP through an activated gamma-phospho-Glu-tRNA(Gln). The GatDE system is specific for glutamate and does not act on aspartate. This chain is Glutamyl-tRNA(Gln) amidotransferase subunit E, found in Methanobrevibacter smithii (strain ATCC 35061 / DSM 861 / OCM 144 / PS).